We begin with the raw amino-acid sequence, 300 residues long: uncharacterized protein (300 aa).

2 disordered regions span residues 167–186 (DVFLNSSPPPHTAQVSHHEH) and 224–244 (ADGSSLETSSMSSPRPEDASH). The segment covering 224–236 (ADGSSLETSSMSS) has biased composition (polar residues).

This is an uncharacterized protein from Rattus norvegicus (Rat).